The following is a 336-amino-acid chain: F420-dependent glucose-6-phosphate dehydrogenase (336 aa).

Residue Asp37 coordinates coenzyme F420-(gamma-Glu)n. His38 (proton donor) is an active-site residue. Coenzyme F420-(gamma-Glu)n is bound by residues Thr74 and 105–106; that span reads SG. The active-site Proton acceptor is Glu107. Coenzyme F420-(gamma-Glu)n contacts are provided by residues Asn110, 173–174, and 176–177; these read SG and SA. Substrate-binding residues include Thr191, Lys194, Lys255, and Arg279.

The protein belongs to the F420-dependent glucose-6-phosphate dehydrogenase family. Homodimer.

The enzyme catalyses oxidized coenzyme F420-(gamma-L-Glu)(n) + D-glucose 6-phosphate + H(+) = 6-phospho-D-glucono-1,5-lactone + reduced coenzyme F420-(gamma-L-Glu)(n). Its function is as follows. Catalyzes the coenzyme F420-dependent oxidation of glucose 6-phosphate (G6P) to 6-phosphogluconolactone. The polypeptide is F420-dependent glucose-6-phosphate dehydrogenase (Beutenbergia cavernae (strain ATCC BAA-8 / DSM 12333 / CCUG 43141 / JCM 11478 / NBRC 16432 / NCIMB 13614 / HKI 0122)).